The chain runs to 488 residues: Calcium/calmodulin-dependent protein kinase type II subunit delta (488 aa).

N-acetylalanine is present on Ala2. The 259-residue stretch at Tyr14–Ile272 folds into the Protein kinase domain. ATP is bound by residues Leu20–Val28 and Lys43. Asp136 (proton acceptor) is an active-site residue. An autoinhibitory domain region spans residues His283–Lys292. Thr287 bears the Phosphothreonine; by autocatalysis mark. A calmodulin-binding region spans residues Leu291–Lys301. 2 positions are modified to phosphothreonine; by autocatalysis: Thr306 and Thr307. Position 315 is a phosphoserine (Ser315). At Lys317 the chain carries N6-acetyllysine. Phosphoserine occurs at positions 318 and 340. Residues Gly325–Asp350 are disordered. Positions Ser332 to Thr347 are enriched in polar residues. A Phosphothreonine modification is found at Thr341. A Phosphoserine modification is found at Ser343. 2 positions are modified to phosphothreonine: Thr346 and Thr347. Residue Ser414 is modified to Phosphoserine.

It belongs to the protein kinase superfamily. CAMK Ser/Thr protein kinase family. CaMK subfamily. In terms of assembly, CAMK2 is composed of 4 different chains: alpha (CAMK2A), beta (CAMK2B), gamma (CAMK2G), and delta (CAMK2D). The different isoforms assemble into homo- or heteromultimeric holoenzymes composed of 12 subunits with two hexameric rings stacked one on top of the other. Interacts with RRAD and CACNB2. Post-translationally, autophosphorylation of Thr-287 following activation by Ca(2+)/calmodulin. Phosphorylation of Thr-287 locks the kinase into an activated state.

Its subcellular location is the cell membrane. The protein resides in the sarcolemma. It is found in the sarcoplasmic reticulum membrane. The catalysed reaction is L-seryl-[protein] + ATP = O-phospho-L-seryl-[protein] + ADP + H(+). It catalyses the reaction L-threonyl-[protein] + ATP = O-phospho-L-threonyl-[protein] + ADP + H(+). Activated by Ca(2+)/calmodulin. Binding of calmodulin results in conformational change that relieves intrasteric autoinhibition and allows autophosphorylation of Thr-287 which turns the kinase in a constitutively active form and confers to the kinase a Ca(2+)-independent activity. Calcium/calmodulin-dependent protein kinase involved in the regulation of Ca(2+) homeostatis and excitation-contraction coupling (ECC) in heart by targeting ion channels, transporters and accessory proteins involved in Ca(2+) influx into the myocyte, Ca(2+) release from the sarcoplasmic reticulum (SR), SR Ca(2+) uptake and Na(+) and K(+) channel transport. Targets also transcription factors and signaling molecules to regulate heart function. In its activated form, is involved in the pathogenesis of dilated cardiomyopathy and heart failure. Contributes to cardiac decompensation and heart failure by regulating SR Ca(2+) release via direct phosphorylation of RYR2 Ca(2+) channel on 'Ser-2808'. In the nucleus, phosphorylates the MEF2 repressor HDAC4, promoting its nuclear export and binding to 14-3-3 protein, and expression of MEF2 and genes involved in the hypertrophic program. Is essential for left ventricular remodeling responses to myocardial infarction. In pathological myocardial remodeling acts downstream of the beta adrenergic receptor signaling cascade to regulate key proteins involved in ECC. Regulates Ca(2+) influx to myocytes by binding and phosphorylating the L-type Ca(2+) channel subunit beta-2 CACNB2. In addition to Ca(2+) channels, can target and regulate the cardiac sarcolemmal Na(+) channel Nav1.5/SCN5A and the K+ channel Kv4.3/KCND3, which contribute to arrhythmogenesis in heart failure. Phosphorylates phospholamban (PLN/PLB), an endogenous inhibitor of SERCA2A/ATP2A2, contributing to the enhancement of SR Ca(2+) uptake that may be important in frequency-dependent acceleration of relaxation (FDAR) and maintenance of contractile function during acidosis. May participate in the modulation of skeletal muscle function in response to exercise, by regulating SR Ca(2+) transport through phosphorylation of PLN/PLB and triadin, a ryanodine receptor-coupling factor. In response to interferon-gamma (IFN-gamma) stimulation, catalyzes phosphorylation of STAT1, stimulating the JAK-STAT signaling pathway. This Bos taurus (Bovine) protein is Calcium/calmodulin-dependent protein kinase type II subunit delta (CAMK2D).